A 268-amino-acid chain; its full sequence is Thymidylate synthase (268 aa).

A dUMP-binding site is contributed by R27. H57 contacts (6R)-5,10-methylene-5,6,7,8-tetrahydrofolate. Position 132 to 133 (132 to 133) interacts with dUMP; sequence RR. C152 functions as the Nucleophile in the catalytic mechanism. Residues 172-175, N183, and 213-215 each bind dUMP; these read RSAD and HVY. A (6R)-5,10-methylene-5,6,7,8-tetrahydrofolate-binding site is contributed by D175. Position 267 (A267) interacts with (6R)-5,10-methylene-5,6,7,8-tetrahydrofolate.

This sequence belongs to the thymidylate synthase family. Bacterial-type ThyA subfamily. Homodimer.

The protein resides in the cytoplasm. It catalyses the reaction dUMP + (6R)-5,10-methylene-5,6,7,8-tetrahydrofolate = 7,8-dihydrofolate + dTMP. It participates in pyrimidine metabolism; dTTP biosynthesis. Its function is as follows. Catalyzes the reductive methylation of 2'-deoxyuridine-5'-monophosphate (dUMP) to 2'-deoxythymidine-5'-monophosphate (dTMP) while utilizing 5,10-methylenetetrahydrofolate (mTHF) as the methyl donor and reductant in the reaction, yielding dihydrofolate (DHF) as a by-product. This enzymatic reaction provides an intracellular de novo source of dTMP, an essential precursor for DNA biosynthesis. This is Thymidylate synthase from Kineococcus radiotolerans (strain ATCC BAA-149 / DSM 14245 / SRS30216).